Consider the following 1045-residue polypeptide: Desmoglein-1 (1045 aa).

An N-terminal signal peptide occupies residues 1–23 (MNWPFFRTAAVLFIFLVVLEVNS). Positions 24–49 (EFRIQVRDYNTKNGTIKWHSIRRQKR) are excised as a propeptide. Residues asparagine 36, asparagine 110, and asparagine 180 are each glycosylated (N-linked (GlcNAc...) asparagine). Cadherin domains lie at 50–158 (EWIK…PVFS), 159–270 (MSTF…PYME), 271–385 (LPSN…GSVF), and 386–496 (RPGS…TDGA). Residues 50–546 (EWIKFAAACR…HPLDNVHFGP (497 aa)) lie on the Extracellular side of the membrane. A helical transmembrane segment spans residues 547–567 (AGIGLLIMGFLVLGLVPFLLM). The Cytoplasmic segment spans residues 568 to 1045 (YCDCGGAPGG…TKYSTVQYTK (478 aa)). Desmoglein repeat repeat units follow at residues 814–840 (TYPS…TMTE), 841–870 (SYTT…ERVV), 871–900 (GPIS…ERVI), 901–928 (APNS…ERVI), and 929–957 (RPTS…ERVV). The disordered stretch occupies residues 1019–1045 (FSNTLGSASPTTTRSRITKYSTVQYTK). Residues 1020 to 1045 (SNTLGSASPTTTRSRITKYSTVQYTK) show a composition bias toward polar residues.

Binds to JUP/plakoglobin. Interacts with PKP2. Interacts with DSC3; there is evidence to suggest that the interaction promotes cell-cell adhesion of keratinocytes.

Its subcellular location is the cell membrane. It localises to the cell junction. The protein localises to the desmosome. The protein resides in the cytoplasm. It is found in the nucleus. Component of intercellular desmosome junctions. Involved in the interaction of plaque proteins and intermediate filaments mediating cell-cell adhesion. This Sus scrofa (Pig) protein is Desmoglein-1 (DSG1).